The sequence spans 417 residues: UDP-N-acetylglucosamine 1-carboxyvinyltransferase (417 aa).

Position 22–23 (22–23 (KN)) interacts with phosphoenolpyruvate. Arginine 93 serves as a coordination point for UDP-N-acetyl-alpha-D-glucosamine. The active-site Proton donor is the cysteine 117. Cysteine 117 is subject to 2-(S-cysteinyl)pyruvic acid O-phosphothioketal. UDP-N-acetyl-alpha-D-glucosamine-binding positions include 122–126 (RPVDQ), aspartate 305, and isoleucine 327.

Belongs to the EPSP synthase family. MurA subfamily.

The protein localises to the cytoplasm. The catalysed reaction is phosphoenolpyruvate + UDP-N-acetyl-alpha-D-glucosamine = UDP-N-acetyl-3-O-(1-carboxyvinyl)-alpha-D-glucosamine + phosphate. Its pathway is cell wall biogenesis; peptidoglycan biosynthesis. Cell wall formation. Adds enolpyruvyl to UDP-N-acetylglucosamine. This Chromobacterium violaceum (strain ATCC 12472 / DSM 30191 / JCM 1249 / CCUG 213 / NBRC 12614 / NCIMB 9131 / NCTC 9757 / MK) protein is UDP-N-acetylglucosamine 1-carboxyvinyltransferase.